The chain runs to 334 residues: Glutaminase (334 aa).

Positions 76, 126, 170, 177, 201, 253, and 271 each coordinate substrate.

Belongs to the glutaminase family. Homotetramer.

The catalysed reaction is L-glutamine + H2O = L-glutamate + NH4(+). The protein is Glutaminase of Trichormus variabilis (strain ATCC 29413 / PCC 7937) (Anabaena variabilis).